The chain runs to 715 residues: ATP-dependent DNA helicase Hel308 (715 aa).

The short motif at 1-29 is the Q motif element; that stretch reads MKVEELRIDERIKEVLKKRGISELYPPQA. Residues Gln28 and 46–53 each bind ATP; that span reads IPTASGKT. In terms of domain architecture, Helicase ATP-binding spans 33–197; that stretch reads TSGILKGENA…WLNAKLIKSD (165 aa). A DEAH box motif is present at residues 145-148; the sequence is DEIH. Residues 229–422 form the Helicase C-terminal domain; it reads LVYDAIKRSK…ILRGQILALI (194 aa).

This sequence belongs to the helicase family. Hel308 subfamily. Monomer.

The enzyme catalyses Couples ATP hydrolysis with the unwinding of duplex DNA by translocating in the 3'-5' direction.. The catalysed reaction is ATP + H2O = ADP + phosphate + H(+). DNA-dependent ATPase and 3'-5' DNA helicase that may be involved in repair of stalled replication forks. In Pyrococcus horikoshii (strain ATCC 700860 / DSM 12428 / JCM 9974 / NBRC 100139 / OT-3), this protein is ATP-dependent DNA helicase Hel308.